Consider the following 313-residue polypeptide: D-alanine--D-alanine ligase (313 aa).

An ATP-grasp domain is found at K108 to S308. Residue V138–Y193 coordinates ATP. Positions 262, 275, and 277 each coordinate Mg(2+).

Belongs to the D-alanine--D-alanine ligase family. Requires Mg(2+) as cofactor. It depends on Mn(2+) as a cofactor.

It is found in the cytoplasm. The catalysed reaction is 2 D-alanine + ATP = D-alanyl-D-alanine + ADP + phosphate + H(+). It participates in cell wall biogenesis; peptidoglycan biosynthesis. Functionally, cell wall formation. In Burkholderia multivorans (strain ATCC 17616 / 249), this protein is D-alanine--D-alanine ligase.